The chain runs to 466 residues: 23S rRNA (uracil(1939)-C(5))-methyltransferase RlmD (466 aa).

The TRAM domain maps to 1-54 (MVDVLNIESLDLEARGIAHRDGKVLFVEGALPGERVTVQTVRRKPSYEIAKVEE). C67, C73, C76, and C155 together coordinate [4Fe-4S] cluster. 6 residues coordinate S-adenosyl-L-methionine: Q264, F293, N298, E314, N342, and D363. The active-site Nucleophile is C393.

This sequence belongs to the class I-like SAM-binding methyltransferase superfamily. RNA M5U methyltransferase family. RlmD subfamily.

The catalysed reaction is uridine(1939) in 23S rRNA + S-adenosyl-L-methionine = 5-methyluridine(1939) in 23S rRNA + S-adenosyl-L-homocysteine + H(+). Catalyzes the formation of 5-methyl-uridine at position 1939 (m5U1939) in 23S rRNA. The sequence is that of 23S rRNA (uracil(1939)-C(5))-methyltransferase RlmD from Bordetella pertussis (strain Tohama I / ATCC BAA-589 / NCTC 13251).